Reading from the N-terminus, the 1105-residue chain is Probable diguanylate cyclase DgcE (1105 aa).

The next 10 helical transmembrane spans lie at 9–29 (LIAL…SFIF), 38–58 (QFGT…VAFY), 64–84 (MWPG…ILLF), 88–108 (SLNM…AVLL), 127–147 (LALG…VLLT), 156–176 (FLIW…LGLL), 190–207 (LLFE…LSWL), 211–228 (YLPW…WSAV), 236–256 (FLIF…DPSL), and 270–290 (WLPF…MYAF). One can recognise a PAS 1 domain in the interval 300-370 (SETHFRNAME…QQVEKLISGE (71 aa)). PAC domains lie at 374-426 (YSME…VNQQ) and 501-552 (FKLE…ALFQ). The region spanning 553-623 (EKERLHITLD…LMENIYSADT (71 aa)) is the PAS 2 domain. Positions 626 to 680 (SAIEQDVVLHCRSGGSYDVHYSITPLSTLDGSNIGSVLVIQDVTESRKMLRQLSY) constitute a PAC 3 domain. One can recognise a GGDEF domain in the interval 712–845 (QRHALVFIDL…GRGRVTVYEP (134 aa)). Asp-720 is a binding site for Mg(2+). Substrate contacts are provided by Asn-728, His-733, and Asp-737. Mg(2+) is bound at residue Asp-763. Residue Asp-763 is the Proton acceptor of the active site. Arg-783 is a binding site for substrate. In terms of domain architecture, EAL spans 855–1104 (AAMSLDEQWR…LLVNSSYFAI (250 aa)).

Homodimer. The cofactor is Mg(2+).

Its subcellular location is the cell inner membrane. It carries out the reaction 2 GTP = 3',3'-c-di-GMP + 2 diphosphate. The protein operates within purine metabolism; 3',5'-cyclic di-GMP biosynthesis. Catalyzes the synthesis of cyclic-di-GMP (c-di-GMP) via the condensation of 2 GTP molecules. Involved in the control of the switch from cell motility to adhesion via regulation of cellular levels of c-di-GMP. Part of a signaling cascade that regulates curli biosynthesis. The cascade is composed of two c-di-GMP control modules, in which c-di-GMP controlled by the DgcE/PdeH pair (module I) regulates the activity of the DgcM/PdeR pair (module II), which in turn regulates activity of the transcription factor MlrA and expression of the master biofilm regulator csgD. In Escherichia coli (strain K12), this protein is Probable diguanylate cyclase DgcE.